Reading from the N-terminus, the 174-residue chain is Shikimate kinase 2 (174 aa).

ATP is bound at residue 12–17 (GAGKTT). Mg(2+) contacts are provided by T16 and D32. Substrate contacts are provided by D34, R58, and G79. Positions 112-126 (AEDPEEAQRPSLTGK) are LID domain. R120 serves as a coordination point for ATP. R139 is a binding site for substrate. Q155 contacts ATP.

Belongs to the shikimate kinase family. AroL subfamily. As to quaternary structure, monomer. The cofactor is Mg(2+).

It localises to the cytoplasm. It catalyses the reaction shikimate + ATP = 3-phosphoshikimate + ADP + H(+). It functions in the pathway metabolic intermediate biosynthesis; chorismate biosynthesis; chorismate from D-erythrose 4-phosphate and phosphoenolpyruvate: step 5/7. In terms of biological role, catalyzes the specific phosphorylation of the 3-hydroxyl group of shikimic acid using ATP as a cosubstrate. This is Shikimate kinase 2 from Yersinia pestis bv. Antiqua (strain Antiqua).